The chain runs to 170 residues: uncharacterized protein (170 aa).

The VOC domain occupies 25-151 (PALSPHLVVD…FGHHWSLGQP (127 aa)).

This is an uncharacterized protein from Mycobacterium tuberculosis (strain CDC 1551 / Oshkosh).